Here is a 284-residue protein sequence, read N- to C-terminus: L-ribulose-5-phosphate 3-epimerase UlaE (284 aa).

Belongs to the L-ribulose-5-phosphate 3-epimerase family.

It carries out the reaction L-ribulose 5-phosphate = L-xylulose 5-phosphate. It participates in cofactor degradation; L-ascorbate degradation; D-xylulose 5-phosphate from L-ascorbate: step 3/4. Its function is as follows. Catalyzes the isomerization of L-xylulose-5-phosphate to L-ribulose-5-phosphate. Is involved in the anaerobic L-ascorbate utilization. This Shigella flexneri protein is L-ribulose-5-phosphate 3-epimerase UlaE.